The primary structure comprises 112 residues: uncharacterized protein (112 aa).

3 consecutive transmembrane segments (helical) span residues 33–53 (PSPLLLSLLLHYTVLFSPFGA), 58–78 (LYIYIYIYIYIYIYMCINVCT), and 91–111 (CVYVCTHFNIYIHTYIYLLFV).

The protein localises to the membrane. This is an uncharacterized protein from Saccharomyces cerevisiae (strain ATCC 204508 / S288c) (Baker's yeast).